The primary structure comprises 340 residues: Glycerol-3-phosphate dehydrogenase [NAD(P)+] (340 aa).

NADPH-binding residues include Ser-14, Phe-15, Arg-35, and Lys-109. Positions 109 and 137 each coordinate sn-glycerol 3-phosphate. Ala-141 serves as a coordination point for NADPH. The sn-glycerol 3-phosphate site is built by Lys-192, Asp-245, Ser-255, Arg-256, and Asn-257. Lys-192 (proton acceptor) is an active-site residue. Arg-256 contacts NADPH. NADPH-binding residues include Val-280 and Glu-282.

Belongs to the NAD-dependent glycerol-3-phosphate dehydrogenase family.

It localises to the cytoplasm. The catalysed reaction is sn-glycerol 3-phosphate + NAD(+) = dihydroxyacetone phosphate + NADH + H(+). It catalyses the reaction sn-glycerol 3-phosphate + NADP(+) = dihydroxyacetone phosphate + NADPH + H(+). Its pathway is membrane lipid metabolism; glycerophospholipid metabolism. In terms of biological role, catalyzes the reduction of the glycolytic intermediate dihydroxyacetone phosphate (DHAP) to sn-glycerol 3-phosphate (G3P), the key precursor for phospholipid synthesis. This is Glycerol-3-phosphate dehydrogenase [NAD(P)+] from Teredinibacter turnerae (strain ATCC 39867 / T7901).